Consider the following 111-residue polypeptide: UPF0060 membrane protein Krad_3114 (111 aa).

The next 4 helical transmembrane spans lie at 7-27 (IALFVLAALLEIGGAWLVWQG), 33-53 (GLAWIGAGVIALGLYGFAATL), 62-82 (VLAAYGGVFVAGSLLWAAVVD), and 88-108 (RFDVAGALVCLVGVGIVMYAP).

The protein belongs to the UPF0060 family.

Its subcellular location is the cell membrane. The sequence is that of UPF0060 membrane protein Krad_3114 from Kineococcus radiotolerans (strain ATCC BAA-149 / DSM 14245 / SRS30216).